The following is a 451-amino-acid chain: Heat shock factor protein (451 aa).

Residues 12–117 mediate DNA binding; that stretch reads VPAFLAKLWT…LLENIKRKVN (106 aa). Disordered stretches follow at residues 210-273 and 285-307; these read LNDS…LEAS and LTPSQSPEQSPAPPKLDDTPISP. Over residues 232–246 the composition is skewed to polar residues; it reads PSSTSYPVSGFTDSS.

The protein belongs to the HSF family. As to quaternary structure, homotrimer. In terms of processing, exhibits temperature-dependent phosphorylation.

Its subcellular location is the nucleus. Its function is as follows. DNA-binding protein that specifically binds heat shock promoter elements (HSE) and activates transcription. This is Heat shock factor protein (hsf1) from Xenopus laevis (African clawed frog).